Reading from the N-terminus, the 883-residue chain is Phosphoenolpyruvate carboxylase (883 aa).

Catalysis depends on residues His-138 and Lys-546.

It belongs to the PEPCase type 1 family. Requires Mg(2+) as cofactor.

It catalyses the reaction oxaloacetate + phosphate = phosphoenolpyruvate + hydrogencarbonate. Functionally, forms oxaloacetate, a four-carbon dicarboxylic acid source for the tricarboxylic acid cycle. This is Phosphoenolpyruvate carboxylase from Escherichia coli O7:K1 (strain IAI39 / ExPEC).